The primary structure comprises 347 residues: Succinylglutamate desuccinylase (347 aa).

The Zn(2+) site is built by histidine 64, glutamate 67, and histidine 159. The active site involves glutamate 222.

This sequence belongs to the AspA/AstE family. Succinylglutamate desuccinylase subfamily. Zn(2+) serves as cofactor.

The catalysed reaction is N-succinyl-L-glutamate + H2O = L-glutamate + succinate. The protein operates within amino-acid degradation; L-arginine degradation via AST pathway; L-glutamate and succinate from L-arginine: step 5/5. Transforms N(2)-succinylglutamate into succinate and glutamate. In Burkholderia cenocepacia (strain ATCC BAA-245 / DSM 16553 / LMG 16656 / NCTC 13227 / J2315 / CF5610) (Burkholderia cepacia (strain J2315)), this protein is Succinylglutamate desuccinylase.